Reading from the N-terminus, the 194-residue chain is CASP-like protein 2C1 (194 aa).

Residues Met1–Thr18 lie on the Cytoplasmic side of the membrane. The chain crosses the membrane as a helical span at residues Glu19–Leu39. At Asn40–Gln59 the chain is on the extracellular side. The chain crosses the membrane as a helical span at residues Ala60 to Leu80. The Cytoplasmic portion of the chain corresponds to Arg81–Lys109. Residues Gly110 to Leu130 form a helical membrane-spanning segment. The Extracellular segment spans residues Tyr131–Gln151. A helical transmembrane segment spans residues Val152–Val172. The Cytoplasmic portion of the chain corresponds to Ser173–Gly194.

This sequence belongs to the Casparian strip membrane proteins (CASP) family. Homodimer and heterodimers.

It is found in the cell membrane. This Oryza sativa subsp. japonica (Rice) protein is CASP-like protein 2C1.